Reading from the N-terminus, the 198-residue chain is Proteasome subunit beta 1 (198 aa).

The propeptide at 1–8 (MSMYMPGA) is removed in mature form; by autocatalysis. T9 serves as the catalytic Nucleophile.

This sequence belongs to the peptidase T1B family. The 20S proteasome core is composed of 14 alpha and 14 beta subunits that assemble into four stacked heptameric rings, resulting in a barrel-shaped structure. The two inner rings, each composed of seven catalytic beta subunits, are sandwiched by two outer rings, each composed of seven alpha subunits. The catalytic chamber with the active sites is on the inside of the barrel. Has a gated structure, the ends of the cylinder being occluded by the N-termini of the alpha-subunits. Is capped at one or both ends by the proteasome regulatory ATPase, PAN.

The protein resides in the cytoplasm. The catalysed reaction is Cleavage of peptide bonds with very broad specificity.. The formation of the proteasomal ATPase PAN-20S proteasome complex, via the docking of the C-termini of PAN into the intersubunit pockets in the alpha-rings, triggers opening of the gate for substrate entry. Interconversion between the open-gate and close-gate conformations leads to a dynamic regulation of the 20S proteasome proteolysis activity. Functionally, component of the proteasome core, a large protease complex with broad specificity involved in protein degradation. This chain is Proteasome subunit beta 1, found in Nitrosopumilus maritimus (strain SCM1).